The chain runs to 225 residues: Uracil-DNA glycosylase (225 aa).

Residue D65 is the Proton acceptor of the active site.

The protein belongs to the uracil-DNA glycosylase (UDG) superfamily. UNG family.

The protein resides in the cytoplasm. It carries out the reaction Hydrolyzes single-stranded DNA or mismatched double-stranded DNA and polynucleotides, releasing free uracil.. Its function is as follows. Excises uracil residues from the DNA which can arise as a result of misincorporation of dUMP residues by DNA polymerase or due to deamination of cytosine. The polypeptide is Uracil-DNA glycosylase (Bacillus anthracis (strain A0248)).